The primary structure comprises 372 residues: tRNA-specific 2-thiouridylase MnmA (372 aa).

Residues 11–18 and methionine 37 contribute to the ATP site; that span reads GMSGGVDS. Residues 97–99 are interaction with target base in tRNA; it reads NPD. The Nucleophile role is filled by cysteine 102. Cysteine 102 and cysteine 199 are disulfide-bonded. Residue glycine 126 participates in ATP binding. The segment at 149–151 is interaction with tRNA; sequence KDQ. Cysteine 199 acts as the Cysteine persulfide intermediate in catalysis. Residues 309-310 are interaction with tRNA; sequence RY.

The protein belongs to the MnmA/TRMU family.

It is found in the cytoplasm. It carries out the reaction S-sulfanyl-L-cysteinyl-[protein] + uridine(34) in tRNA + AH2 + ATP = 2-thiouridine(34) in tRNA + L-cysteinyl-[protein] + A + AMP + diphosphate + H(+). Catalyzes the 2-thiolation of uridine at the wobble position (U34) of tRNA, leading to the formation of s(2)U34. This chain is tRNA-specific 2-thiouridylase MnmA, found in Staphylococcus aureus (strain USA300).